Reading from the N-terminus, the 258-residue chain is Spindlin-3 (258 aa).

The interval 1 to 23 is disordered; that stretch reads MKTPFGKAAAGQRSRTGAGHGSV. 3 tudor-like domain regions span residues 50-99, 129-178, and 210-255; these read VGCR…LELH, VGKA…YQLL, and VGKQ…YDLV. Histone H3K4me3 and H3R8me2a binding regions lie at residues E138 and 246 to 248; that span reads DFH.

Belongs to the SPIN/STSY family. As to quaternary structure, interacts with C11orf84/SPINDOC.

Its function is as follows. Exhibits H3K4me3-binding activity. The polypeptide is Spindlin-3 (SPIN3) (Homo sapiens (Human)).